We begin with the raw amino-acid sequence, 32 residues long: Islet amyloid polypeptide (32 aa).

The protein belongs to the calcitonin family. Can form homodimers. Interacts with IDE and INS. Interaction with INS inhibits homodimerization and fibril formation.

Its subcellular location is the secreted. Its function is as follows. Amylin/IAPP is a glucoregulatory peptide hormone that plays an important role in the regulation of energy homeostasis. Selectively inhibits insulin-stimulated glucose utilization and glycogen deposition in muscle, while not affecting adipocyte glucose metabolism. IAPP function is mediated by the CALCR-RAMPs (AMYRs) receptor complexes. Amylin can also bind CALCR receptor in the absence of RAMPs, although it is more selective for AMYRs. The chain is Islet amyloid polypeptide (IAPP) from Ovis aries (Sheep).